A 698-amino-acid chain; its full sequence is Auxin response factor 22 (698 aa).

The segment at residues 128–230 is a DNA-binding region (TF-B3); it reads FAKTLTQSDA…ELCVGIRRAK (103 aa). Over residues 549–577 the composition is skewed to polar residues; that stretch reads TSSGSTETLSPGVTGNSSPNGNAHKTGNA. Residues 549 to 579 form a disordered region; the sequence is TSSGSTETLSPGVTGNSSPNGNAHKTGNASD. A PB1 domain is found at 603-683; sequence AGHCKVFMES…RRLTIIAGDR (81 aa).

This sequence belongs to the ARF family. Homodimers and heterodimers. As to expression, expressed in roots, culms, leaves and young panicles.

It is found in the nucleus. In terms of biological role, auxin response factors (ARFs) are transcriptional factors that bind specifically to the DNA sequence 5'-TGTCTC-3' found in the auxin-responsive promoter elements (AuxREs). The sequence is that of Auxin response factor 22 (ARF22) from Oryza sativa subsp. japonica (Rice).